The sequence spans 150 residues: Deoxyuridine 5'-triphosphate nucleotidohydrolase (150 aa).

Substrate-binding positions include R69–G71, N82, L86–D88, and M96.

It belongs to the dUTPase family. Mg(2+) is required as a cofactor.

It carries out the reaction dUTP + H2O = dUMP + diphosphate + H(+). It participates in pyrimidine metabolism; dUMP biosynthesis; dUMP from dCTP (dUTP route): step 2/2. Its function is as follows. This enzyme is involved in nucleotide metabolism: it produces dUMP, the immediate precursor of thymidine nucleotides and it decreases the intracellular concentration of dUTP so that uracil cannot be incorporated into DNA. This Alcanivorax borkumensis (strain ATCC 700651 / DSM 11573 / NCIMB 13689 / SK2) protein is Deoxyuridine 5'-triphosphate nucleotidohydrolase.